Reading from the N-terminus, the 326-residue chain is DNA polymerase III subunit delta' (326 aa).

As to quaternary structure, DNA polymerase III contains a core (composed of alpha, epsilon and theta chains) that associates with a tau subunit. This core dimerizes to form the POLIII' complex. PolIII' associates with the gamma complex (composed of gamma, delta, delta', psi and chi chains) and with the beta chain to form the complete DNA polymerase III complex.

The catalysed reaction is DNA(n) + a 2'-deoxyribonucleoside 5'-triphosphate = DNA(n+1) + diphosphate. DNA polymerase III is a complex, multichain enzyme responsible for most of the replicative synthesis in bacteria. This DNA polymerase also exhibits 3' to 5' exonuclease activity. This is DNA polymerase III subunit delta' (holB) from Buchnera aphidicola subsp. Acyrthosiphon pisum (strain APS) (Acyrthosiphon pisum symbiotic bacterium).